The primary structure comprises 182 residues: MSDNLSLHGTTILCLKKNEEIIIAADGQVSHGNTVLKSTARKLRTIANNKIIAGFAGSTADGLALFEKLAVKIEQHKHNLLRSAVELAKDWRSDKYLRRLEAMMIVADRSHILILTGNGDVVEPENNVAAIGSGGLFALSAARALMSYENNLTAEEIALKSMNIAADLCVFSNHNIIMEKVV.

The active site involves Thr10. Na(+) is bound by residues Ala166, Cys169, and Ser172.

Belongs to the peptidase T1B family. HslV subfamily. In terms of assembly, a double ring-shaped homohexamer of HslV is capped on each side by a ring-shaped HslU homohexamer. The assembly of the HslU/HslV complex is dependent on binding of ATP.

The protein localises to the cytoplasm. It carries out the reaction ATP-dependent cleavage of peptide bonds with broad specificity.. With respect to regulation, allosterically activated by HslU binding. Functionally, protease subunit of a proteasome-like degradation complex believed to be a general protein degrading machinery. The sequence is that of ATP-dependent protease subunit HslV from Rickettsia africae (strain ESF-5).